Consider the following 336-residue polypeptide: Phospho-N-acetylmuramoyl-pentapeptide-transferase (336 aa).

The next 10 membrane-spanning stretches (helical) occupy residues 1–21, 56–76, 78–98, 124–144, 148–168, 184–204, 210–230, 239–259, 264–284, and 314–334; these read MLPL…SLFL, IPTA…LLLF, IQLW…ALGW, CLAA…FLSF, FLGI…FAIA, GLDG…LVVA, PWAF…LGFL, VFMG…CAVL, FLLL…IVQV, and VVRN…IAVF.

Belongs to the glycosyltransferase 4 family. MraY subfamily. The cofactor is Mg(2+).

It localises to the cell inner membrane. It carries out the reaction UDP-N-acetyl-alpha-D-muramoyl-L-alanyl-gamma-D-glutamyl-meso-2,6-diaminopimeloyl-D-alanyl-D-alanine + di-trans,octa-cis-undecaprenyl phosphate = di-trans,octa-cis-undecaprenyl diphospho-N-acetyl-alpha-D-muramoyl-L-alanyl-D-glutamyl-meso-2,6-diaminopimeloyl-D-alanyl-D-alanine + UMP. It functions in the pathway cell wall biogenesis; peptidoglycan biosynthesis. Functionally, catalyzes the initial step of the lipid cycle reactions in the biosynthesis of the cell wall peptidoglycan: transfers peptidoglycan precursor phospho-MurNAc-pentapeptide from UDP-MurNAc-pentapeptide onto the lipid carrier undecaprenyl phosphate, yielding undecaprenyl-pyrophosphoryl-MurNAc-pentapeptide, known as lipid I. The sequence is that of Phospho-N-acetylmuramoyl-pentapeptide-transferase from Chlamydia trachomatis serovar L2b (strain UCH-1/proctitis).